The following is a 505-amino-acid chain: Lysine--tRNA ligase (505 aa).

The Mg(2+) site is built by Glu415 and Glu422.

It belongs to the class-II aminoacyl-tRNA synthetase family. In terms of assembly, homodimer. Mg(2+) is required as a cofactor.

It is found in the cytoplasm. It carries out the reaction tRNA(Lys) + L-lysine + ATP = L-lysyl-tRNA(Lys) + AMP + diphosphate. This is Lysine--tRNA ligase from Pectobacterium carotovorum subsp. carotovorum (strain PC1).